A 72-amino-acid polypeptide reads, in one-letter code: DNA-directed RNA polymerase subunit omega (72 aa).

Belongs to the RNA polymerase subunit omega family. In terms of assembly, the RNAP catalytic core consists of 2 alpha, 1 beta, 1 beta' and 1 omega subunit. When a sigma factor is associated with the core the holoenzyme is formed, which can initiate transcription.

It carries out the reaction RNA(n) + a ribonucleoside 5'-triphosphate = RNA(n+1) + diphosphate. Functionally, promotes RNA polymerase assembly. Latches the N- and C-terminal regions of the beta' subunit thereby facilitating its interaction with the beta and alpha subunits. The protein is DNA-directed RNA polymerase subunit omega of Staphylococcus aureus (strain Mu3 / ATCC 700698).